Consider the following 189-residue polypeptide: MALSFSLLMAVLVLSYKSICSLGCDLPQTHSLGNRRALILLAQMGRISPFSCLKDRHDFGFPQEEFDGNQFQKAQAISVLHEMIQQTFNLFSTKDSSATWEQSLLEKFSTELNQQLNDLEACVIQEVGVEETPLMNVDSILAVKKYFQRITLYLTEKKYSPCAWEVVRAEIMRSFSLSKIFQERLRRKE.

Positions 1–23 (MALSFSLLMAVLVLSYKSICSLG) are cleaved as a signal peptide. Cystine bridges form between Cys24-Cys122 and Cys52-Cys162.

It belongs to the alpha/beta interferon family.

The protein resides in the secreted. Produced by macrophages, IFN-alpha have antiviral activities. Interferon stimulates the production of two enzymes: a protein kinase and an oligoadenylate synthetase. This chain is Interferon alpha-21 (IFNA21), found in Homo sapiens (Human).